A 471-amino-acid chain; its full sequence is 4-aminobutyrate aminotransferase (471 aa).

135–136 contacts pyridoxal 5'-phosphate; it reads GA. Residue R192 participates in substrate binding. K326 carries the post-translational modification N6-(pyridoxal phosphate)lysine. Residue T351 coordinates pyridoxal 5'-phosphate.

The protein belongs to the class-III pyridoxal-phosphate-dependent aminotransferase family. As to quaternary structure, homodimer and homotetramer. Requires pyridoxal 5'-phosphate as cofactor.

The protein resides in the cytoplasm. The enzyme catalyses 4-aminobutanoate + 2-oxoglutarate = succinate semialdehyde + L-glutamate. Functionally, required for the degradation of gamma-aminobutyric acid (GABA), which is important for utilization of GABA as nitrogen source and for oxidative stress tolerance. Deaminates GABA to succinate semialdehyde, which in turn is converted to succinate by the succinate-semialdehyde dehydrogenase UGA2. Cannot transaminate beta-alanine (BAL). This Saccharomyces cerevisiae (strain ATCC 204508 / S288c) (Baker's yeast) protein is 4-aminobutyrate aminotransferase (UGA1).